The sequence spans 266 residues: MAFTGKRLKGLIAATFTPMTPNSDINLLVIEQYVDYLVQKQHIRNIFVNGTTGEGMSLSICERKRLTEEWVKHARGKMDNVIVHVGCLGLSDSKDLAAHAASCGADAISAVCPSFLKPANLDALVLYLKDVASAAPSLPFYYYHIPKLTGITYQIYELLGKVKENIPSFRGVKFSDVNLMDFSLCVSEYKEFDCLYGVDEQLLGALAFGAHGAVGSTYNYLGNKNGDMLEAFEAGNLQKARKIQCSLQEFLYFVFDMAHFSGSKAN.

Aceneuramate-binding residues include T51 and T52. The active-site Proton donor is the Y143. K173 functions as the Schiff-base intermediate with substrate in the catalytic mechanism. Residues S175, G197, D199, E200, and S216 each coordinate aceneuramate.

The protein belongs to the DapA family. NanA subfamily. As to quaternary structure, homotetramer.

Its subcellular location is the cytoplasm. The enzyme catalyses aceneuramate = aldehydo-N-acetyl-D-mannosamine + pyruvate. The protein operates within amino-sugar metabolism; N-acetylneuraminate degradation. Catalyzes the cleavage of N-acetylneuraminic acid (sialic acid) to form pyruvate and N-acetylmannosamine via a Schiff base intermediate. It prevents sialic acids from being recycled and returning to the cell surface. Involved in the N-glycolylneuraminic acid (Neu5Gc) degradation pathway. This is N-acetylneuraminate lyase B (npl-b) from Xenopus laevis (African clawed frog).